A 636-amino-acid chain; its full sequence is Probable potassium transport system protein Kup (636 aa).

Transmembrane regions (helical) follow at residues 23-43, 63-83, 114-134, 150-170, 182-202, 217-237, 260-280, 298-318, 350-370, 379-399, 407-427, and 432-452; these read LVIGAIGVVFGDIGTSPLYSL, IISLLFWAMTIVVSIKYVVFV, VLMMLGIFGACMFYGDAVITP, PQLSRFVIPITLVILVALFLI, FGPVMVVWFVTLGLLGLYNLV, ISFLIAHSLQAFIVLGSVFLV, WFVLVMPCLILNYFGQGAMLL, LLIPMVVLATCATVIASQAVI, IYLPVINWILLVLVVAVVISF, AYGIAVTTTMVITTFLAAVVM, PALVTLLGLSFLLVDLAFFAA, and VAEGGWFPLLLGSTAFFLLMT.

Belongs to the HAK/KUP transporter (TC 2.A.72) family.

The protein resides in the cell inner membrane. It carries out the reaction K(+)(in) + H(+)(in) = K(+)(out) + H(+)(out). Transport of potassium into the cell. Likely operates as a K(+):H(+) symporter. The chain is Probable potassium transport system protein Kup from Cupriavidus pinatubonensis (strain JMP 134 / LMG 1197) (Cupriavidus necator (strain JMP 134)).